The following is a 1434-amino-acid chain: Probable ATP-dependent RNA helicase spindle-E (1434 aa).

The tract at residues 66–86 (VGGPSNTKRTKTLDELESDDD) is disordered. One can recognise a Helicase ATP-binding domain in the interval 127 to 294 (MKAIKENPVV…FASCKSMPPV (168 aa)). An ATP-binding site is contributed by 140-147 (GETGCGKT). Residues 240-243 (DEVH) carry the DEAH box motif. Positions 354–526 (QSEQSYEEAK…SSVLKAKELD (173 aa)) constitute a Helicase C-terminal domain. A Tudor domain is found at 938 to 1001 (ASAITKGLQL…RLMRHELRRD (64 aa)).

It belongs to the DEAD box helicase family. DEAH subfamily.

It is found in the cytoplasm. It carries out the reaction ATP + H2O = ADP + phosphate + H(+). Its function is as follows. Probable ATP-binding RNA helicase which plays a central role during spermatogenesis and oogenesis by repressing transposable elements and preventing their mobilization, which is essential for the germline integrity. Acts via the piRNA metabolic process, which mediates the repression of transposable elements during meiosis by forming complexes composed of piRNAs and Piwi and govern the methylation and subsequent repression of transposons. Involved in the repression of LTR retrotransposon copia. Also involved in telomere regulation by repressing specialized telomeric retroelements HeT-A, TAHRE, and TART; Drosophila telomeres being maintained by transposition of specialized telomeric retroelements. Involved in telomeric trans-silencing, a repression mechanism by which a transposon or a transgene inserted in subtelomeric heterochromatin has the capacity to repress in trans in the female germline, a homologous transposon, or transgene located in euchromatin. Involved in the repression of testis-expressed Stellate genes by the homologous Su(Ste) repeats. Required for anteroposterior and dorsoventral axis formation during oogenesis. The sequence is that of Probable ATP-dependent RNA helicase spindle-E (spn-E) from Drosophila grimshawi (Hawaiian fruit fly).